The primary structure comprises 880 residues: Valine--tRNA ligase (880 aa).

Positions 49–59 (PNVTGKLHLGH) match the 'HIGH' region motif. The short motif at 525 to 529 (KMSKS) is the 'KMSKS' region element. Residue Lys-528 participates in ATP binding. Positions 809–879 (LAGLLDLEEE…AVRARIKELK (71 aa)) form a coiled coil.

Belongs to the class-I aminoacyl-tRNA synthetase family. ValS type 1 subfamily. In terms of assembly, monomer.

It is found in the cytoplasm. The enzyme catalyses tRNA(Val) + L-valine + ATP = L-valyl-tRNA(Val) + AMP + diphosphate. Catalyzes the attachment of valine to tRNA(Val). As ValRS can inadvertently accommodate and process structurally similar amino acids such as threonine, to avoid such errors, it has a 'posttransfer' editing activity that hydrolyzes mischarged Thr-tRNA(Val) in a tRNA-dependent manner. The protein is Valine--tRNA ligase of Halalkalibacterium halodurans (strain ATCC BAA-125 / DSM 18197 / FERM 7344 / JCM 9153 / C-125) (Bacillus halodurans).